A 354-amino-acid polypeptide reads, in one-letter code: MRTWIEIDKENLKYNVLKLKEIANNKEILGVVKANAYGLGSIEIAKILKEVEVKLFGVANLEEAIELQEAGIKDKILILGASFEDELVEATKRGVHVAISSMGQLQFLVSKNLNPNIHLKFDTGMTRLGFEVDDAEKVIEYCKNNNLNLVGIFSHLSDSDGNTIETKNFTLEQIEKFKKIVNSLNLEYIHISNSAGITNFHNDILGNLVRLGIGMYSFTGNKKTPYLKNIFTIKSKILFIKKVKKDSFVSYGRHYTLPADSTYAVLPIGYADGLKKYLSKGGYVLINNHRCEIIGNICMDMTMIRVPKEIENSIKIGDEVTVINADILDNLNIPELCVWEFMTGIGRRVKRIIV.

Lys-33 serves as the catalytic Proton acceptor; specific for D-alanine. Residue Lys-33 is modified to N6-(pyridoxal phosphate)lysine. Position 127 (Arg-127) interacts with substrate. Residue Tyr-251 is the Proton acceptor; specific for L-alanine of the active site. Met-299 is a substrate binding site.

Belongs to the alanine racemase family. Pyridoxal 5'-phosphate is required as a cofactor.

The catalysed reaction is L-alanine = D-alanine. It functions in the pathway amino-acid biosynthesis; D-alanine biosynthesis; D-alanine from L-alanine: step 1/1. Catalyzes the interconversion of L-alanine and D-alanine. May also act on other amino acids. The chain is Alanine racemase (alr) from Fusobacterium nucleatum subsp. nucleatum (strain ATCC 25586 / DSM 15643 / BCRC 10681 / CIP 101130 / JCM 8532 / KCTC 2640 / LMG 13131 / VPI 4355).